A 1167-amino-acid chain; its full sequence is Carbamoyl phosphate synthase large chain (1167 aa).

Residues 1-455 (MPRRTDIKSI…SLQKALRGLE (455 aa)) form a carboxyphosphate synthetic domain region. Residues Arg129, Arg221, Gly227, Gly228, Glu260, Val262, Glu267, Gly293, Val294, His295, Gln337, and Glu351 each contribute to the ATP site. The 197-residue stretch at 184 to 380 (LETRWNLGEG…IAKIAAKLAV (197 aa)) folds into the ATP-grasp 1 domain. Mg(2+)-binding residues include Gln337, Glu351, and Asn353. The Mn(2+) site is built by Gln337, Glu351, and Asn353. Positions 456–619 (TGLTGLDEIE…PFAGALANEA (164 aa)) are oligomerization domain. Residues 620-1031 (QVSSRKKVVI…AFAKSQLGAG (412 aa)) form a carbamoyl phosphate synthetic domain region. An ATP-grasp 2 domain is found at 748–960 (QKLLHKLGLS…IAKIAARIMA (213 aa)). Arg784, Thr844, Leu846, Glu851, Gly876, Ile877, His878, Ser879, Gln919, and Glu931 together coordinate ATP. 3 residues coordinate Mg(2+): Gln919, Glu931, and Asn933. Residues Gln919, Glu931, and Asn933 each contribute to the Mn(2+) site. The region spanning 1032-1167 (VDLPRSGTLF…EVRPLQEYFA (136 aa)) is the MGS-like domain. The allosteric domain stretch occupies residues 1032-1167 (VDLPRSGTLF…EVRPLQEYFA (136 aa)).

This sequence belongs to the CarB family. In terms of assembly, composed of two chains; the small (or glutamine) chain promotes the hydrolysis of glutamine to ammonia, which is used by the large (or ammonia) chain to synthesize carbamoyl phosphate. Tetramer of heterodimers (alpha,beta)4. Mg(2+) serves as cofactor. The cofactor is Mn(2+).

The catalysed reaction is hydrogencarbonate + L-glutamine + 2 ATP + H2O = carbamoyl phosphate + L-glutamate + 2 ADP + phosphate + 2 H(+). It catalyses the reaction hydrogencarbonate + NH4(+) + 2 ATP = carbamoyl phosphate + 2 ADP + phosphate + 2 H(+). It participates in amino-acid biosynthesis; L-arginine biosynthesis; carbamoyl phosphate from bicarbonate: step 1/1. Its pathway is pyrimidine metabolism; UMP biosynthesis via de novo pathway; (S)-dihydroorotate from bicarbonate: step 1/3. Functionally, large subunit of the glutamine-dependent carbamoyl phosphate synthetase (CPSase). CPSase catalyzes the formation of carbamoyl phosphate from the ammonia moiety of glutamine, carbonate, and phosphate donated by ATP, constituting the first step of 2 biosynthetic pathways, one leading to arginine and/or urea and the other to pyrimidine nucleotides. The large subunit (synthetase) binds the substrates ammonia (free or transferred from glutamine from the small subunit), hydrogencarbonate and ATP and carries out an ATP-coupled ligase reaction, activating hydrogencarbonate by forming carboxy phosphate which reacts with ammonia to form carbamoyl phosphate. The sequence is that of Carbamoyl phosphate synthase large chain from Mesorhizobium japonicum (strain LMG 29417 / CECT 9101 / MAFF 303099) (Mesorhizobium loti (strain MAFF 303099)).